The primary structure comprises 317 residues: Apolipoprotein E (317 aa).

The signal sequence occupies residues 1-18 (MKVLWAALLVTFLAGCQA). Tandem repeats lie at residues 80–101 (TLMD…EQLS), 102–123 (PVAE…ARLG), 124–145 (ADME…AMLG), 146–167 (QSTE…KRLL), 168–189 (RDAD…EGAE), 190–211 (RGVS…VRAA), 212–233 (TVGS…ERLR), and 234–255 (ARME…EQVA). Residues 80–255 (TLMDETMKEL…RLDEVKEQVA (176 aa)) form an 8 X 22 AA approximate tandem repeats region. Methionine sulfoxide is present on methionine 143. Serine 147 is modified (phosphoserine). Residues 158-168 (HLRKLRKRLLR) form an LDL and other lipoprotein receptors binding region. Residue 162-165 (LRKR) coordinates heparin. Residues 210–290 (AATVGSLASQ…SWFEPLVEDM (81 aa)) are lipid-binding and lipoprotein association. 229–236 (GERLRARM) lines the heparin pocket. Positions 266–317 (QQISLQAEAFQARLKSWFEPLVEDMQRQWAGLVEKVQAAVGASTAPVPSDNH) are homooligomerization. The specificity for association with VLDL stretch occupies residues 278-290 (RLKSWFEPLVEDM).

The protein belongs to the apolipoprotein A1/A4/E family. In terms of assembly, homotetramer. May interact with ABCA1; functionally associated with ABCA1 in the biogenesis of HDLs. May interact with APP/A4 amyloid-beta peptide; the interaction is extremely stable in vitro but its physiological significance is unclear. May interact with MAPT. May interact with MAP2. In the cerebrospinal fluid, interacts with secreted SORL1. Interacts with PMEL; this allows the loading of PMEL luminal fragment on ILVs to induce fibril nucleation. Post-translationally, APOE exists as multiple glycosylated and sialylated glycoforms within cells and in plasma. The extent of glycosylation and sialylation are tissue and context specific. In terms of processing, glycated in plasma VLDL. Phosphorylated by FAM20C in the extracellular medium.

The protein resides in the secreted. It localises to the extracellular space. It is found in the extracellular matrix. Its subcellular location is the extracellular vesicle. The protein localises to the endosome. The protein resides in the multivesicular body. In terms of biological role, APOE is an apolipoprotein, a protein associating with lipid particles, that mainly functions in lipoprotein-mediated lipid transport between organs via the plasma and interstitial fluids. APOE is a core component of plasma lipoproteins and is involved in their production, conversion and clearance. Apolipoproteins are amphipathic molecules that interact both with lipids of the lipoprotein particle core and the aqueous environment of the plasma. As such, APOE associates with chylomicrons, chylomicron remnants, very low density lipoproteins (VLDL) and intermediate density lipoproteins (IDL) but shows a preferential binding to high-density lipoproteins (HDL). It also binds a wide range of cellular receptors including the LDL receptor/LDLR, the LDL receptor-related proteins LRP1, LRP2 and LRP8 and the very low-density lipoprotein receptor/VLDLR that mediate the cellular uptake of the APOE-containing lipoprotein particles. Finally, APOE also has a heparin-binding activity and binds heparan-sulfate proteoglycans on the surface of cells, a property that supports the capture and the receptor-mediated uptake of APOE-containing lipoproteins by cells. A main function of APOE is to mediate lipoprotein clearance through the uptake of chylomicrons, VLDLs, and HDLs by hepatocytes. APOE is also involved in the biosynthesis by the liver of VLDLs as well as their uptake by peripheral tissues ensuring the delivery of triglycerides and energy storage in muscle, heart and adipose tissues. By participating in the lipoprotein-mediated distribution of lipids among tissues, APOE plays a critical role in plasma and tissues lipid homeostasis. APOE is also involved in two steps of reverse cholesterol transport, the HDLs-mediated transport of cholesterol from peripheral tissues to the liver, and thereby plays an important role in cholesterol homeostasis. First, it is functionally associated with ABCA1 in the biogenesis of HDLs in tissues. Second, it is enriched in circulating HDLs and mediates their uptake by hepatocytes. APOE also plays an important role in lipid transport in the central nervous system, regulating neuron survival and sprouting. This Papio anubis (Olive baboon) protein is Apolipoprotein E (APOE).